We begin with the raw amino-acid sequence, 635 residues long: Rab11 family-interacting protein 4 (635 aa).

One can recognise an EF-hand domain in the interval 49–84 (GQGEEVEKLVKCLDPNDLGRINFKDFCRGVFAMKGC). Residues Asp-62, Asn-64, Arg-68, and Asp-73 each coordinate Ca(2+). The tract at residues 82 to 635 (KGCEELLKDV…HNPSILEIKH (554 aa)) is necessary for interaction with RAB11A, subcellular location, homo- or heterooligomerization. Disordered stretches follow at residues 147 to 176 (GPQE…EKEP) and 216 to 258 (EDYG…QTPR). Acidic residues predominate over residues 216-225 (EDYGEGDDVD). The stretch at 279 to 615 (KINLLNDLEA…EEINFRLRQY (337 aa)) forms a coiled coil. An FIP-RBD domain is found at 572–634 (EAKNLFATQT…DHNPSILEIK (63 aa)).

In terms of assembly, homodimer. Forms a complex with Rab11 (RAB11A or RAB11B) and ARF6. Interacts with RAB11A; the interaction is direct. Forms a heterooligomeric complex with RAB11FIP2, RAB11FIP3 and RAB11FIP5. Interacts with ECPAS. In terms of tissue distribution, strongly expressed in the developing retina. Expressed predominantly in neural tissues.

It localises to the recycling endosome membrane. The protein localises to the cleavage furrow. Its subcellular location is the midbody. It is found in the cytoplasmic vesicle. Acts as a regulator of endocytic traffic by participating in membrane delivery. Required for the abscission step in cytokinesis, possibly by acting as an 'address tag' delivering recycling endosome membranes to the cleavage furrow during late cytokinesis. May play a role in differentiation during retinal development, in a Rab11-independent manner. The chain is Rab11 family-interacting protein 4 (Rab11fip4) from Mus musculus (Mouse).